A 155-amino-acid chain; its full sequence is MMTQDYKLQVEAIKCGTVIDHIPAQIGFKLLSLFKLTATDQRITIGLNLPSKRSGRKDLIKIENTFLTEQQANQLAMYAPDATVNRIDNYEVVKKLTLSLPERIDAVLTCPNSNCISHNEPVDSSFTVKAQRGEISLKCKYCEKEFDHLAVLHAD.

Zn(2+) contacts are provided by Cys110, Cys115, Cys139, and Cys142.

Belongs to the PyrI family. As to quaternary structure, contains catalytic and regulatory chains. Requires Zn(2+) as cofactor.

Functionally, involved in allosteric regulation of aspartate carbamoyltransferase. The sequence is that of Aspartate carbamoyltransferase regulatory chain from Yersinia pseudotuberculosis serotype IB (strain PB1/+).